The following is a 196-amino-acid chain: Large ribosomal subunit protein uL10 (196 aa).

Residues 167 to 196 form a disordered region; the sequence is EKKAAEGPAEAPQPATEPPAEAPEAPADAE.

This sequence belongs to the universal ribosomal protein uL10 family. Part of the ribosomal stalk of the 50S ribosomal subunit. The N-terminus interacts with L11 and the large rRNA to form the base of the stalk. The C-terminus forms an elongated spine to which L12 dimers bind in a sequential fashion forming a multimeric L10(L12)X complex.

Its function is as follows. Forms part of the ribosomal stalk, playing a central role in the interaction of the ribosome with GTP-bound translation factors. This Mycolicibacterium paratuberculosis (strain ATCC BAA-968 / K-10) (Mycobacterium paratuberculosis) protein is Large ribosomal subunit protein uL10.